A 248-amino-acid chain; its full sequence is Ubiquinone biosynthesis O-methyltransferase (248 aa).

S-adenosyl-L-methionine-binding residues include R41, G72, D93, and M136.

The protein belongs to the methyltransferase superfamily. UbiG/COQ3 family.

It carries out the reaction a 3-demethylubiquinol + S-adenosyl-L-methionine = a ubiquinol + S-adenosyl-L-homocysteine + H(+). It catalyses the reaction a 3-(all-trans-polyprenyl)benzene-1,2-diol + S-adenosyl-L-methionine = a 2-methoxy-6-(all-trans-polyprenyl)phenol + S-adenosyl-L-homocysteine + H(+). The protein operates within cofactor biosynthesis; ubiquinone biosynthesis. Functionally, O-methyltransferase that catalyzes the 2 O-methylation steps in the ubiquinone biosynthetic pathway. This is Ubiquinone biosynthesis O-methyltransferase from Brucella melitensis biotype 2 (strain ATCC 23457).